Reading from the N-terminus, the 308-residue chain is Ornithine carbamoyltransferase (308 aa).

Carbamoyl phosphate-binding positions include 56–59 (STRT), Q83, R107, and 134–137 (HPCQ). L-ornithine-binding positions include N165, D225, and 229–230 (SM). Carbamoyl phosphate-binding positions include 266–267 (CL) and R294.

Belongs to the aspartate/ornithine carbamoyltransferase superfamily. OTCase family.

Its subcellular location is the cytoplasm. The catalysed reaction is carbamoyl phosphate + L-ornithine = L-citrulline + phosphate + H(+). The protein operates within amino-acid biosynthesis; L-arginine biosynthesis; L-arginine from L-ornithine and carbamoyl phosphate: step 1/3. Reversibly catalyzes the transfer of the carbamoyl group from carbamoyl phosphate (CP) to the N(epsilon) atom of ornithine (ORN) to produce L-citrulline. The sequence is that of Ornithine carbamoyltransferase from Roseobacter denitrificans (strain ATCC 33942 / OCh 114) (Erythrobacter sp. (strain OCh 114)).